The chain runs to 1592 residues: ABC transporter ATP-binding protein/permease VMR1 (1592 aa).

The Vacuolar portion of the chain corresponds to 1–33 (MGTDPLIIRNNGSFWEVDDFTRLGRTQLLSYYL). A glycan (N-linked (GlcNAc...) asparagine) is linked at Asn-11. A helical membrane pass occupies residues 34-54 (PLAIIASIGIFALCRSGLSRY). Residues 55-74 (VRSAECDLVNEYLFGAQEER) are Cytoplasmic-facing. A helical membrane pass occupies residues 75–95 (KEDNSIERLLRNSNTQANYVN). The Vacuolar segment spans residues 96–100 (VKKQG). Residues 101–121 (RILKLRHFDITTIDVKQIDAK) form a helical membrane-spanning segment. Over 122 to 131 (NHGGLTFSRP) the chain is Cytoplasmic. A helical membrane pass occupies residues 132 to 152 (STSDHLRKSSEIVLMSLQIIG). Residues 153 to 170 (LSFLRVTKINIELTNRDV) lie on the Vacuolar side of the membrane. Residues 171 to 191 (TTLLLFWLILLSLSILRVYKR) form a helical membrane-spanning segment. Over 192–329 (STNLWAICFT…NKHINNLTLA (138 aa)) the chain is Cytoplasmic. A helical transmembrane segment spans residues 330-350 (LFESFKTYLLIGMLWVLVNSI). Residues 338–632 (LLIGMLWVLV…LSNMLSFINQ (295 aa)) form the ABC transmembrane type-1 1 domain. The Vacuolar segment spans residues 351–379 (VNLLPTILMKRFLEIVDNPNRSSSCMNLA). Residue Asn-370 is glycosylated (N-linked (GlcNAc...) asparagine). The helical transmembrane segment at 380–400 (WLYIIGMFICRLTLAICNSQG) threads the bilayer. The Cytoplasmic segment spans residues 401–465 (QFVSDKICLR…SFKVSELANY (65 aa)). A helical transmembrane segment spans residues 466-486 (LYVTVQAVIMIIVVVGLLFNF). Topologically, residues 487–489 (LGV) are vacuolar. Residues 490–510 (SAFAGISIILVMFPLNFLLAN) traverse the membrane as a helical segment. Over 511–572 (LLGKFQKQTL…SLLKKSLVWS (62 aa)) the chain is Cytoplasmic. The chain crosses the membrane as a helical span at residues 573–593 (VTSFLWFVTPTLVTGVTFAIC). Over 594–614 (TFVQHEDLNAPLAFTTLSLFT) the chain is Vacuolar. The helical transmembrane segment at 615-635 (LLKTPLDQLSNMLSFINQSKV) threads the bilayer. Topologically, residues 636-989 (SLKRISDFLR…ALTALFALYI (354 aa)) are cytoplasmic. One can recognise an ABC transporter 1 domain in the interval 664–908 (IEFKNATLTW…GLFKEKYVQL (245 aa)). 702 to 709 (GSTGSGKS) serves as a coordination point for ATP. An ABC transmembrane type-1 2 domain is found at 981 to 1282 (LTALFALYIT…LVRLYSTFEM (302 aa)). Residues 990-1010 (TAQILFISQSWWIRHWVNDTN) form a helical membrane-spanning segment. Topologically, residues 1011–1051 (VRINAPGFAMDTLPLKGMTDSSKNKHNAFYYLTVYFLIGII) are vacuolar. Residues 1052-1072 (QAMLGGFKTMMTFLSGMRASR) form a helical membrane-spanning segment. Residues 1073 to 1115 (KIFNNLLDLVLHAQIRFFDVTPVGRIMNRFSKDIEGVDQELIP) are Cytoplasmic-facing. Residues 1116–1136 (YLEVTIFCLIQCASIIFLITV) form a helical membrane-spanning segment. Position 1137 (Ile-1137) is a topological domain, vacuolar. Residues 1138 to 1158 (TPRFLTVAVIVFVLYFFVGKW) traverse the membrane as a helical segment. Topologically, residues 1159-1229 (YLTASRELKR…VTVKWFSFRV (71 aa)) are cytoplasmic. A helical transmembrane segment spans residues 1230–1250 (DMIGAFIVLASGSFILLNIAN). Residues 1251-1252 (ID) are Vacuolar-facing. The chain crosses the membrane as a helical span at residues 1253–1273 (SGLAGISLTYAILFTDGALWL). Over 1274–1592 (VRLYSTFEMN…IAKQSSKMMK (319 aa)) the chain is Cytoplasmic. An ABC transporter 2 domain is found at 1323–1572 (IEIENLSLRY…ERGIFYSMCR (250 aa)). ATP is bound at residue 1357–1364 (GRTGAGKS).

The protein belongs to the ABC transporter superfamily. As to quaternary structure, ABC transporter which may be involved in multidrug resistance.

It localises to the vacuole membrane. The chain is ABC transporter ATP-binding protein/permease VMR1 (VMR1) from Saccharomyces cerevisiae (strain ATCC 204508 / S288c) (Baker's yeast).